The sequence spans 409 residues: NDP-glycosyltransferase ltbB (409 aa).

An N-linked (GlcNAc...) asparagine glycan is attached at N36. A helical membrane pass occupies residues 319–339 (IWAFAYVWAWLQTLYTAPWIA).

It belongs to the GT2 glycosyltransferase family.

Its subcellular location is the membrane. Its pathway is secondary metabolite biosynthesis. In terms of biological role, NDP-glycosyltransferase; part of the gene cluster that mediates the biosynthesis of luteodienoside A, a glycosylated polyketide consisting of an unusual 1-O-beta-D-glucopyranosyl-myo-inositol (glucinol) ester of 3-hydroxy-2,2,4-trimethylocta-4,6-dienoic acid. LtbB likely serves as a glucinol synthase by transferring D-glucose to myo-inositol using NDP-glucose as a substrate. The ltbA carnitine O-acyltransferase (cAT) domain uses glucinol produced by the glycosyltransferase ltbB as an offloading substrate to release luteodienoside A from the HR-PKS. Since ltbA and ltbB are sufficient for the biosynthesis of luteodienoside A, the functions of the methyltransferase ltbC and the FAD-binding monooxygenase ltbD within the pathway remain obscur. This Aspergillus luteorubrus protein is NDP-glycosyltransferase ltbB.